The sequence spans 421 residues: Gamma-glutamyl phosphate reductase (421 aa).

The protein belongs to the gamma-glutamyl phosphate reductase family.

It is found in the cytoplasm. It carries out the reaction L-glutamate 5-semialdehyde + phosphate + NADP(+) = L-glutamyl 5-phosphate + NADPH + H(+). The protein operates within amino-acid biosynthesis; L-proline biosynthesis; L-glutamate 5-semialdehyde from L-glutamate: step 2/2. Catalyzes the NADPH-dependent reduction of L-glutamate 5-phosphate into L-glutamate 5-semialdehyde and phosphate. The product spontaneously undergoes cyclization to form 1-pyrroline-5-carboxylate. This Roseobacter denitrificans (strain ATCC 33942 / OCh 114) (Erythrobacter sp. (strain OCh 114)) protein is Gamma-glutamyl phosphate reductase.